A 109-amino-acid polypeptide reads, in one-letter code: uncharacterized protein (109 aa).

Belongs to the archaeal ATPase family.

This is an uncharacterized protein from Methanocaldococcus jannaschii (strain ATCC 43067 / DSM 2661 / JAL-1 / JCM 10045 / NBRC 100440) (Methanococcus jannaschii).